A 602-amino-acid chain; its full sequence is MANKKRNVRNFSIIAHIDHGKSTLADRILENTKTVTKREMKDQLLDGMDLERERGITIKLNAVQLAYTSNKGEDFIFHLIDTPGHVDFTYEVSRSLAACEGAILVVDAAQGIEAQTLANVYLAMENDLEIIPVINKIDLPSADTEKVKKELEDVLGIDGDDVILASAKANIGIEEILERITEVVPEPAGDGEAPLKALIFDSLYDSYRGVIAYVCVKEGSIKVGDKIQMMATGKEFEVNEVGVFTPKTVVKKELHVGDVGYLTASIKNVGDSRVGDTITHANRKANEALPGYRRLNPMVFCGMYPVDTNDYNDLREALERLELNDSSLQYEPETSQALGFGYRCGFLGLLHMEIIQERIEREFGINLITTAPSVIFEVEKTDGEVLNIDNPSEMPDPQVVEQIREPYVEATIMVPNEYVGPVMEISQKKRGNFIDMQYLDDIRVNVVYHIPLSEIVFDFFDQLKSNTKGYASFDYELIGYQQSNLVKMDILLNGDTIDALSFVVHRDFAYERGKQIVEKLKELIPRQQFEVPVQAAIGNKIVARSNIKAVRKDVTAKLYGGDITRKRKLLEKQKEGKKRMKMVGSVEVPQEAFMAVLKMDDN.

The tr-type G domain maps to 6 to 188 (RNVRNFSIIA…RITEVVPEPA (183 aa)). GTP contacts are provided by residues 18–23 (DHGKST) and 135–138 (NKID).

The protein belongs to the TRAFAC class translation factor GTPase superfamily. Classic translation factor GTPase family. LepA subfamily.

It localises to the cell membrane. The enzyme catalyses GTP + H2O = GDP + phosphate + H(+). Functionally, required for accurate and efficient protein synthesis under certain stress conditions. May act as a fidelity factor of the translation reaction, by catalyzing a one-codon backward translocation of tRNAs on improperly translocated ribosomes. Back-translocation proceeds from a post-translocation (POST) complex to a pre-translocation (PRE) complex, thus giving elongation factor G a second chance to translocate the tRNAs correctly. Binds to ribosomes in a GTP-dependent manner. This is Elongation factor 4 from Oceanobacillus iheyensis (strain DSM 14371 / CIP 107618 / JCM 11309 / KCTC 3954 / HTE831).